Consider the following 549-residue polypeptide: Urocanate hydratase (549 aa).

NAD(+) is bound by residues 46–47 (GG), Q124, E190, R195, 236–237 (NA), 257–261 (QTSAH), 267–268 (YV), and Y316. C404 is a catalytic residue. G486 provides a ligand contact to NAD(+).

It belongs to the urocanase family. The cofactor is NAD(+).

The protein resides in the cytoplasm. The catalysed reaction is 4-imidazolone-5-propanoate = trans-urocanate + H2O. Its pathway is amino-acid degradation; L-histidine degradation into L-glutamate; N-formimidoyl-L-glutamate from L-histidine: step 2/3. Its function is as follows. Catalyzes the conversion of urocanate to 4-imidazolone-5-propionate. This Thermoanaerobacter pseudethanolicus (strain ATCC 33223 / 39E) (Clostridium thermohydrosulfuricum) protein is Urocanate hydratase.